A 95-amino-acid chain; its full sequence is Class II hydrophobin 3 (95 aa).

Residues 1–16 (MKLLAVAALLAGAAIA) form the signal peptide. Intrachain disulfides connect Cys28-Cys77, Cys38-Cys68, Cys39-Cys51, and Cys78-Cys89.

This sequence belongs to the cerato-ulmin hydrophobin family.

The protein localises to the secreted. It is found in the cell wall. Functionally, aerial growth, conidiation, and dispersal of filamentous fungi in the environment rely upon a capability of their secreting small amphipathic proteins called hydrophobins (HPBs) with low sequence identity. Class I can self-assemble into an outermost layer of rodlet bundles on aerial cell surfaces, conferring cellular hydrophobicity that supports fungal growth, development and dispersal; whereas Class II form highly ordered films at water-air interfaces through intermolecular interactions but contribute nothing to the rodlet structure. Hyd3 plays a neglectable role in hyphal growth and asexual development and does not seem involved in cellular hydrophobicity, conidial adhesion, stress tolerance nor insect pathogenicity. This Metarhizium robertsii (strain ARSEF 23 / ATCC MYA-3075) (Metarhizium anisopliae (strain ARSEF 23)) protein is Class II hydrophobin 3.